The following is a 313-amino-acid chain: Curved DNA-binding protein (313 aa).

The 65-residue stretch at 5–69 folds into the J domain; that stretch reads DYYKILGVSR…EKRKAYDAIG (65 aa). Residues 71 to 93 are disordered; that stretch reads GWKQGQGFTPPPGWESRPGGEGV.

It localises to the cytoplasm. The protein resides in the nucleoid. Functionally, DNA-binding protein that preferentially recognizes a curved DNA sequence. It is probably a functional analog of DnaJ; displays overlapping activities with DnaJ, but functions under different conditions, probably acting as a molecular chaperone in an adaptive response to environmental stresses other than heat shock. Lacks autonomous chaperone activity; binds native substrates and targets them for recognition by DnaK. Its activity is inhibited by the binding of CbpM. In Coxiella burnetii (strain Dugway 5J108-111), this protein is Curved DNA-binding protein.